The chain runs to 308 residues: Porphobilinogen deaminase (308 aa).

Residue cysteine 241 is modified to S-(dipyrrolylmethanemethyl)cysteine.

The protein belongs to the HMBS family. In terms of assembly, monomer. Dipyrromethane is required as a cofactor.

The catalysed reaction is 4 porphobilinogen + H2O = hydroxymethylbilane + 4 NH4(+). The protein operates within porphyrin-containing compound metabolism; protoporphyrin-IX biosynthesis; coproporphyrinogen-III from 5-aminolevulinate: step 2/4. In terms of biological role, tetrapolymerization of the monopyrrole PBG into the hydroxymethylbilane pre-uroporphyrinogen in several discrete steps. This Staphylococcus carnosus (strain TM300) protein is Porphobilinogen deaminase.